We begin with the raw amino-acid sequence, 473 residues long: Proline transporter 1 (473 aa).

The span at 1–11 (MDQHQLDEENQ) shows a compositional bias: basic and acidic residues. The segment at 1–31 (MDQHQLDEENQRAALFHSSAPSSSLGADGEE) is disordered. The next 11 helical transmembrane spans lie at 65–85 (PWYQ…VLGY), 88–108 (SIMV…AAAI), 145–165 (LTWA…IILA), 188–208 (IALS…LSAL), 210–230 (IWLG…FVMS), 252–272 (IFTT…GMLP), 290–310 (LWFQ…MGYW), 333–353 (VANL…ASPM), 378–398 (VGVR…LPFL), 401–421 (FMSL…ANHM), and 437–457 (WHWL…VAAV).

The protein belongs to the amino acid/polyamine transporter 2 family. Amino acid/auxin permease (AAAP) (TC 2.A.18.3) subfamily. As to expression, expressed in roots, leaf blades and sheaths, stems and young panicle.

The protein localises to the cell membrane. Proline transporter that mediates proline transport across the plasma membrane when expressed in a heterologous system (Xenopus oocytes). This Oryza sativa subsp. japonica (Rice) protein is Proline transporter 1 (PROT1).